The chain runs to 513 residues: ATP synthase subunit alpha (513 aa).

ATP is bound at residue G169–T176.

It belongs to the ATPase alpha/beta chains family. As to quaternary structure, F-type ATPases have 2 components, CF(1) - the catalytic core - and CF(0) - the membrane proton channel. CF(1) has five subunits: alpha(3), beta(3), gamma(1), delta(1), epsilon(1). CF(0) has three main subunits: a(1), b(2) and c(9-12). The alpha and beta chains form an alternating ring which encloses part of the gamma chain. CF(1) is attached to CF(0) by a central stalk formed by the gamma and epsilon chains, while a peripheral stalk is formed by the delta and b chains.

It is found in the cell inner membrane. The catalysed reaction is ATP + H2O + 4 H(+)(in) = ADP + phosphate + 5 H(+)(out). In terms of biological role, produces ATP from ADP in the presence of a proton gradient across the membrane. The alpha chain is a regulatory subunit. The sequence is that of ATP synthase subunit alpha from Vibrio alginolyticus.